The following is a 1755-amino-acid chain: Transposon TyH3 Gag-Pol polyprotein (1755 aa).

Composition is skewed to polar residues over residues 1–23, 48–60, and 127–152; these read MESQ…SVTS, TKAN…TPAS, and QSQF…GNTF. 3 disordered regions span residues 1–93, 126–173, and 352–421; these read MESQ…MMTQ, PQSQ…RPPP, and GSRN…SKST. Positions 153–165 are enriched in low complexity; the sequence is TDSSSADSDMTST. Positions 299 to 401 are RNA-binding; it reads NNGIHINNKV…NSKSKTARAH (103 aa). Residues 402-418 are compositionally biased toward low complexity; the sequence is NVSTSNNSPSTDNDSIS. S416 is modified (phosphoserine). The For protease activity; shared with dimeric partner role is filled by D461. Residues 583–640 are integrase-type zinc finger-like; that stretch reads NVHTSESTRKYPYPFIHRMLAHANAQTIRYSLKNNTITYFNESDVDWSSAIDYQCPDC. An Integrase catalytic domain is found at 660–835; the sequence is NSYEPFQYLH…AGLDISTLLP (176 aa). Mg(2+) is bound by residues D671 and D736. 3 disordered regions span residues 956–1087, 1092–1111, and 1130–1187; these read SKAV…ETEK, RSPS…NIVP, and DLPL…DNET. Low complexity predominate over residues 960 to 969; that stretch reads SPTDSTPPST. Residues 1005–1015 are compositionally biased toward polar residues; it reads STPQISNIEST. The segment covering 1038-1053 has biased composition (basic and acidic residues); the sequence is ESSHASKSKDFRHSDS. Polar residues-rich tracts occupy residues 1054–1082 and 1101–1111; these read YSEN…QISD and PENNSSHNIVP. Positions 1178 to 1212 match the Bipartite nuclear localization signal motif; it reads KKRSLEDNETEIKVSRDTWNTKNMRSLEPPRSKKR. The Reverse transcriptase Ty1/copia-type domain occupies 1338–1476; that stretch reads NNYYITQLDI…DILGLEIKYQ (139 aa). 6 residues coordinate Mg(2+): D1346, D1427, D1428, D1610, E1652, and D1685. The RNase H Ty1/copia-type domain occupies 1610–1752; it reads DASYGNQPYY…IKTFKLLTNK (143 aa).

In terms of assembly, the capsid protein forms a homotrimer, from which the VLPs are assembled. The protease is a homodimer, whose active site consists of two apposed aspartic acid residues. Initially, virus-like particles (VLPs) are composed of the structural unprocessed proteins Gag and Gag-Pol, and also contain the host initiator methionine tRNA (tRNA(i)-Met) which serves as a primer for minus-strand DNA synthesis, and a dimer of genomic Ty RNA. Processing of the polyproteins occurs within the particle and proceeds by an ordered pathway, called maturation. First, the protease (PR) is released by autocatalytic cleavage of the Gag-Pol polyprotein yielding capsid protein p45 and a Pol-p154 precursor protein. This cleavage is a prerequisite for subsequent processing of Pol-p154 at the remaining sites to release the mature structural and catalytic proteins. Maturation takes place prior to the RT reaction and is required to produce transposition-competent VLPs.

It is found in the cytoplasm. It localises to the nucleus. The enzyme catalyses DNA(n) + a 2'-deoxyribonucleoside 5'-triphosphate = DNA(n+1) + diphosphate. The catalysed reaction is Endonucleolytic cleavage to 5'-phosphomonoester.. In terms of biological role, capsid protein (CA) is the structural component of the virus-like particle (VLP), forming the shell that encapsulates the retrotransposons dimeric RNA genome. The particles are assembled from trimer-clustered units and there are holes in the capsid shells that allow for the diffusion of macromolecules. CA also has nucleocapsid-like chaperone activity, promoting primer tRNA(i)-Met annealing to the multipartite primer-binding site (PBS), dimerization of Ty1 RNA and initiation of reverse transcription. Its function is as follows. The aspartyl protease (PR) mediates the proteolytic cleavages of the Gag and Gag-Pol polyproteins after assembly of the VLP. Functionally, reverse transcriptase/ribonuclease H (RT) is a multifunctional enzyme that catalyzes the conversion of the retro-elements RNA genome into dsDNA within the VLP. The enzyme displays a DNA polymerase activity that can copy either DNA or RNA templates, and a ribonuclease H (RNase H) activity that cleaves the RNA strand of RNA-DNA heteroduplexes during plus-strand synthesis and hydrolyzes RNA primers. The conversion leads to a linear dsDNA copy of the retrotransposon that includes long terminal repeats (LTRs) at both ends. Integrase (IN) targets the VLP to the nucleus, where a subparticle preintegration complex (PIC) containing at least integrase and the newly synthesized dsDNA copy of the retrotransposon must transit the nuclear membrane. Once in the nucleus, integrase performs the integration of the dsDNA into the host genome. This chain is Transposon TyH3 Gag-Pol polyprotein (TY1B), found in Saccharomyces cerevisiae (Baker's yeast).